We begin with the raw amino-acid sequence, 287 residues long: Taxis protein CheF2 (287 aa).

In terms of assembly, interacts with chemotaxis (Che) proteins as well as flagella accessory (Fla) proteins.

Functionally, involved in taxis signal transduction. The chain is Taxis protein CheF2 (cheF2) from Halobacterium salinarum (strain ATCC 29341 / DSM 671 / R1).